A 260-amino-acid polypeptide reads, in one-letter code: Imidazole glycerol phosphate synthase subunit HisF (260 aa).

Catalysis depends on residues aspartate 11 and aspartate 130.

This sequence belongs to the HisA/HisF family. In terms of assembly, heterodimer of HisH and HisF.

The protein localises to the cytoplasm. The catalysed reaction is 5-[(5-phospho-1-deoxy-D-ribulos-1-ylimino)methylamino]-1-(5-phospho-beta-D-ribosyl)imidazole-4-carboxamide + L-glutamine = D-erythro-1-(imidazol-4-yl)glycerol 3-phosphate + 5-amino-1-(5-phospho-beta-D-ribosyl)imidazole-4-carboxamide + L-glutamate + H(+). The protein operates within amino-acid biosynthesis; L-histidine biosynthesis; L-histidine from 5-phospho-alpha-D-ribose 1-diphosphate: step 5/9. Its function is as follows. IGPS catalyzes the conversion of PRFAR and glutamine to IGP, AICAR and glutamate. The HisF subunit catalyzes the cyclization activity that produces IGP and AICAR from PRFAR using the ammonia provided by the HisH subunit. The sequence is that of Imidazole glycerol phosphate synthase subunit HisF from Psychrobacter cryohalolentis (strain ATCC BAA-1226 / DSM 17306 / VKM B-2378 / K5).